A 553-amino-acid chain; its full sequence is Copine-9 (553 aa).

C2 domains lie at 1 to 125 (MSLG…ERTL) and 132 to 255 (KCGT…FTVY). The N-linked (GlcNAc...) asparagine glycan is linked to Asn95. Residues Asp163, Asp169, Asp225, Asp227, and Asp233 each contribute to the Ca(2+) site. The VWFA domain occupies 299-500 (NFTVAIDFTA…VQFVPFRDYV (202 aa)). Residues 531-553 (TRDIQPRPPPPANPSPIPAPEQP) are disordered. Residues 536 to 553 (PRPPPPANPSPIPAPEQP) show a composition bias toward pro residues.

Belongs to the copine family. The cofactor is Ca(2+). As to expression, expressed in melanocytes.

Functionally, probable calcium-dependent phospholipid-binding protein that may play a role in calcium-mediated intracellular processes. Plays a role in dendrite formation by melanocytes. This is Copine-9 from Homo sapiens (Human).